We begin with the raw amino-acid sequence, 448 residues long: Methylenetetrahydrofolate--tRNA-(uracil-5-)-methyltransferase TrmFO (448 aa).

13 to 18 (GAGLAG) contacts FAD.

This sequence belongs to the MnmG family. TrmFO subfamily. The cofactor is FAD.

It is found in the cytoplasm. It carries out the reaction uridine(54) in tRNA + (6R)-5,10-methylene-5,6,7,8-tetrahydrofolate + NADH + H(+) = 5-methyluridine(54) in tRNA + (6S)-5,6,7,8-tetrahydrofolate + NAD(+). It catalyses the reaction uridine(54) in tRNA + (6R)-5,10-methylene-5,6,7,8-tetrahydrofolate + NADPH + H(+) = 5-methyluridine(54) in tRNA + (6S)-5,6,7,8-tetrahydrofolate + NADP(+). Functionally, catalyzes the folate-dependent formation of 5-methyl-uridine at position 54 (M-5-U54) in all tRNAs. The sequence is that of Methylenetetrahydrofolate--tRNA-(uracil-5-)-methyltransferase TrmFO from Streptococcus pyogenes serotype M1.